The sequence spans 349 residues: tRNA-specific 2-thiouridylase MnmA (349 aa).

ATP contacts are provided by residues Gly7–Ser14 and Leu33. The active-site Nucleophile is the Cys94. Cys94 and Cys193 form a disulfide bridge. Gly119 contacts ATP. Residues Lys143–Gln145 are interaction with tRNA. Cys193 acts as the Cysteine persulfide intermediate in catalysis. The tract at residues Arg298–Tyr299 is interaction with tRNA.

It belongs to the MnmA/TRMU family.

It is found in the cytoplasm. The enzyme catalyses S-sulfanyl-L-cysteinyl-[protein] + uridine(34) in tRNA + AH2 + ATP = 2-thiouridine(34) in tRNA + L-cysteinyl-[protein] + A + AMP + diphosphate + H(+). Catalyzes the 2-thiolation of uridine at the wobble position (U34) of tRNA, leading to the formation of s(2)U34. The sequence is that of tRNA-specific 2-thiouridylase MnmA from Rippkaea orientalis (strain PCC 8801 / RF-1) (Cyanothece sp. (strain PCC 8801)).